The chain runs to 101 residues: NAD(P)H-quinone oxidoreductase subunit 4L, chloroplastic (101 aa).

The next 3 membrane-spanning stretches (helical) occupy residues 2 to 22, 32 to 52, and 61 to 81; these read ILEH…YGLI, MCLE…SDFF, and IFSI…LAIV.

Belongs to the complex I subunit 4L family. In terms of assembly, NDH is composed of at least 16 different subunits, 5 of which are encoded in the nucleus.

It localises to the plastid. Its subcellular location is the chloroplast thylakoid membrane. The catalysed reaction is a plastoquinone + NADH + (n+1) H(+)(in) = a plastoquinol + NAD(+) + n H(+)(out). It carries out the reaction a plastoquinone + NADPH + (n+1) H(+)(in) = a plastoquinol + NADP(+) + n H(+)(out). In terms of biological role, NDH shuttles electrons from NAD(P)H:plastoquinone, via FMN and iron-sulfur (Fe-S) centers, to quinones in the photosynthetic chain and possibly in a chloroplast respiratory chain. The immediate electron acceptor for the enzyme in this species is believed to be plastoquinone. Couples the redox reaction to proton translocation, and thus conserves the redox energy in a proton gradient. The protein is NAD(P)H-quinone oxidoreductase subunit 4L, chloroplastic of Eucalyptus globulus subsp. globulus (Tasmanian blue gum).